Consider the following 350-residue polypeptide: Serpentine receptor class beta-12 (350 aa).

The Extracellular segment spans residues 1–21 (MSEANLTECELAYQLTYHPFY). N-linked (GlcNAc...) asparagine glycosylation is present at asparagine 5. The chain crosses the membrane as a helical span at residues 22-42 (MIAQFWSFFVSLLAMPSLIFF). The Cytoplasmic portion of the chain corresponds to 43–57 (MVEKVFKLPFHGNLK). A helical membrane pass occupies residues 58–78 (FLLVSYFIGTFLFASIICFTF). The Extracellular segment spans residues 79–103 (GYHFFVPFFVTSNCDLIINATLFKY). The N-linked (GlcNAc...) asparagine glycan is linked to asparagine 97. The chain crosses the membrane as a helical span at residues 104–124 (GHMIALIFMTIPMILPTAFTV). Residues 125–141 (ERFVALKMAHSYEHVRT) lie on the Cytoplasmic side of the membrane. Residues 142–162 (LLGPVLVLVVIAIDSMFLYDI) form a helical membrane-spanning segment. Over 163 to 189 (YGQEKFDKPFINFILVPATSALQFNSF) the chain is Extracellular. A helical transmembrane segment spans residues 190–210 (LWYMLYLKITNFICNLILLFI). Topologically, residues 211–243 (HKILHQSSRYRRKNVSLSVKYEMQEISQSSRFT) are cytoplasmic. A helical membrane pass occupies residues 244–264 (LIVTFTHLLFFGWYVSTILLI). At 265–282 (RTVGPDFFRGFINYTVMR) the chain is on the extracellular side. Asparagine 277 carries N-linked (GlcNAc...) asparagine glycosylation. The chain crosses the membrane as a helical span at residues 283 to 303 (GVYCATPTYNLVIVFIGFKAL). The Cytoplasmic segment spans residues 304–350 (NHLNFKRNNKVQSTIQIKSTGQEGAENYDNAISNYWDSVYTMNKSKL).

It belongs to the nematode receptor-like protein srb family. Expressed throughout the head.

It localises to the cell membrane. The protein resides in the perikaryon. Its subcellular location is the cell projection. It is found in the dendrite. Its function is as follows. G-protein coupled receptor. Plays a role in the navigational capacity of sperm and promotes the targeting of sperm derived from males to the fertilization site in the uterus of hermaphrodites. The chain is Serpentine receptor class beta-12 from Caenorhabditis elegans.